The sequence spans 650 residues: MSTQSLYKVPSEIAANALVNDEQYKKMYQESIVNPEGFWREHGNRIDWIKPFTKVKKTSFDDHNLFIKWFYDGTLNASANCLDRHLENNADKLAIIWEGDDAKDQRTLTYGQLHAEVCKFANALRSQGVRRGDVVTVYMPMVPEAAVAMLACARIGAIHSVVFGGFSPDSIASRVIDGNSKVVITADEGVRAGRIIPLKANIDEALSHPDVNCVEKVIVMKRTGGDINWVEGRDIWWGSLMETASEHCIPEEMGAEDPLFLLYTSGSTGNPKGVLHTTGGYMVYAAMTHEYVFDYKENEVYWCTADVGWITGHSYMVYGPLANGATVLIHEGVPNYPTPARLGEMVDRHKVNILYTAPTLIRALMAEGKEQFEGFDGSSLRIMGSVGEPINPEAWRWYNDVIGHEKCPIVDTWWQTETGGILISPLPGATDTKPGSATRPFFGVQPALVDNIGNIVEGANEGNLVILDSWPGQMRTVFGDHDRFVLTYFKTFRGMYFTGDGARRDEDGYYWITGRVDDVINVSGHRLGTAEVESALVAHELVAEAAVVGYPHDIKGQGIYAYVTLTKGSVETEELRQELRQWVRKEIGALATPDLIQWAGGLPKTRSGKIMRRFLRKIAANEVTNLGDSSTLADPAVIDTLIETRLNRSE.

CoA-binding positions include 191 to 194, Thr311, and Asn335; that span reads RAGR. Residues 387–389, 411–416, Asp500, and Arg515 each bind ATP; these read GEP and DTWWQT. Ser523 contacts CoA. Arg526 provides a ligand contact to ATP. Mg(2+) contacts are provided by Val537, His539, and Val542. Arg584 is a CoA binding site. Lys609 is subject to N6-acetyllysine.

This sequence belongs to the ATP-dependent AMP-binding enzyme family. The cofactor is Mg(2+). Acetylated. Deacetylation by the SIR2-homolog deacetylase activates the enzyme.

The enzyme catalyses acetate + ATP + CoA = acetyl-CoA + AMP + diphosphate. In terms of biological role, catalyzes the conversion of acetate into acetyl-CoA (AcCoA), an essential intermediate at the junction of anabolic and catabolic pathways. AcsA undergoes a two-step reaction. In the first half reaction, AcsA combines acetate with ATP to form acetyl-adenylate (AcAMP) intermediate. In the second half reaction, it can then transfer the acetyl group from AcAMP to the sulfhydryl group of CoA, forming the product AcCoA. The protein is Acetyl-coenzyme A synthetase of Shewanella pealeana (strain ATCC 700345 / ANG-SQ1).